The chain runs to 484 residues: uncharacterized protein (484 aa).

The span at 1 to 14 (MIDSTSTATATSKT) shows a compositional bias: low complexity. The segment at 1–32 (MIDSTSTATATSKTVELNTNGSKTDASSENGT) is disordered. Polar residues predominate over residues 15 to 32 (VELNTNGSKTDASSENGT). Position 305 is an N6-(pyridoxal phosphate)lysine (lysine 305).

This sequence belongs to the class-III pyridoxal-phosphate-dependent aminotransferase family. Requires pyridoxal 5'-phosphate as cofactor.

This is an uncharacterized protein from Schizosaccharomyces pombe (strain 972 / ATCC 24843) (Fission yeast).